Reading from the N-terminus, the 270-residue chain is Orotidine 5'-phosphate decarboxylase (270 aa).

Lys89 (proton donor) is an active-site residue.

This sequence belongs to the OMP decarboxylase family. Type 2 subfamily.

The catalysed reaction is orotidine 5'-phosphate + H(+) = UMP + CO2. It participates in pyrimidine metabolism; UMP biosynthesis via de novo pathway; UMP from orotate: step 2/2. The polypeptide is Orotidine 5'-phosphate decarboxylase (Dehalococcoides mccartyi (strain CBDB1)).